We begin with the raw amino-acid sequence, 305 residues long: Ribonuclease BN (305 aa).

The Zn(2+) site is built by H64, H66, D68, H69, H141, D212, and H270. The active-site Proton acceptor is the D68.

Belongs to the RNase Z family. RNase BN subfamily. As to quaternary structure, homodimer. Zn(2+) is required as a cofactor.

Zinc phosphodiesterase, which has both exoribonuclease and endoribonuclease activities. In Escherichia coli O139:H28 (strain E24377A / ETEC), this protein is Ribonuclease BN.